Consider the following 622-residue polypeptide: Solute carrier family 2, facilitated glucose transporter member 12 (622 aa).

Residues 1 to 26 (MVPVENTEGPNLLNQKGREAETEGSC) form a disordered region. The Cytoplasmic portion of the chain corresponds to 1-44 (MVPVENTEGPNLLNQKGREAETEGSCGASGGGHPACAGGPSMFT). Residues 45 to 65 (FLTSVTAAISGLLVGYELGLI) form a helical membrane-spanning segment. The Extracellular portion of the chain corresponds to 66 to 84 (SGALLQIRTLLALTCHEQE). A helical transmembrane segment spans residues 85–105 (MVVSSLLIGAFLASLTGGVLI). Topologically, residues 106–111 (DRYGRR) are cytoplasmic. Residues 112–132 (LAIILSSCLLGLGSLVLIMSL) traverse the membrane as a helical segment. The Extracellular portion of the chain corresponds to 133 to 141 (SYTLLIMGR). Residues 142–162 (VAIGVSISLSSIATCVYIAEI) form a helical membrane-spanning segment. Over 163-168 (APQHRR) the chain is Cytoplasmic. The helical transmembrane segment at 169–189 (GLLVSLNELMIVTGILFAYIS) threads the bilayer. Topologically, residues 190 to 201 (NYAFANISNGWK) are extracellular. Asn-195 carries an N-linked (GlcNAc...) asparagine glycan. Residues 202–222 (YMFGLVIPLGVLQAIAMYFLP) traverse the membrane as a helical segment. Over 223-282 (PSPRFLVMKGQEESAGKVLRKLRVISDTTEELTLIKSSLKDEYQYSFWDLFRSKDNMRTR) the chain is Cytoplasmic. A helical transmembrane segment spans residues 283-303 (ILIGLTLVFFVQTTGQPNILF). At 304 to 321 (YASTVLKSVGFQSNEAAS) the chain is on the extracellular side. Residues 322 to 342 (LASTGVGVVKVVSTIPATLLV) traverse the membrane as a helical segment. The Cytoplasmic segment spans residues 343–349 (DHIGSKT). A helical transmembrane segment spans residues 350–370 (FLCIGSSVMSASLLTMGIVNL). The Extracellular portion of the chain corresponds to 371 to 471 (NINMNFTNIC…PAAYKWLSLA (101 aa)). Asn-375, Asn-387, Asn-400, and Asn-405 each carry an N-linked (GlcNAc...) asparagine glycan. Residues 472-492 (SLLVYVAAFSIGLGPMPWLVL) traverse the membrane as a helical segment. Residues 493-503 (SEIFPGGIRGR) lie on the Cytoplasmic side of the membrane. A helical membrane pass occupies residues 504–524 (AMALTSSMNWGVNLLISLTFL). The Extracellular portion of the chain corresponds to 525–533 (TVTDLIGLS). Residues 534–554 (WVCFIYTIMSLASLAFVVLFI) form a helical membrane-spanning segment. Residues 555–622 (PETKGCSLEQ…GQSQRPSPDT (68 aa)) are Cytoplasmic-facing.

Belongs to the major facilitator superfamily. Sugar transporter (TC 2.A.1.1) family. Glucose transporter subfamily. In terms of tissue distribution, expressed in skeletal muscle, heart, brain, kidney, spleen, adipose tissues and to a lesser extent in small intestine and lung.

It is found in the cell membrane. The protein resides in the endomembrane system. Its subcellular location is the cytoplasm. The protein localises to the perinuclear region. It catalyses the reaction D-glucose(out) = D-glucose(in). In terms of biological role, insulin-independent facilitative glucose transporter. This Mus musculus (Mouse) protein is Solute carrier family 2, facilitated glucose transporter member 12.